The chain runs to 537 residues: Membrane protein insertase YidC (537 aa).

A run of 4 helical transmembrane segments spans residues leucine 5–threonine 25, glycine 353–leucine 373, valine 418–tyrosine 438, and methionine 495–isoleucine 515.

It belongs to the OXA1/ALB3/YidC family. Type 1 subfamily. As to quaternary structure, interacts with the Sec translocase complex via SecD. Specifically interacts with transmembrane segments of nascent integral membrane proteins during membrane integration.

The protein localises to the cell inner membrane. Required for the insertion and/or proper folding and/or complex formation of integral membrane proteins into the membrane. Involved in integration of membrane proteins that insert both dependently and independently of the Sec translocase complex, as well as at least some lipoproteins. Aids folding of multispanning membrane proteins. The polypeptide is Membrane protein insertase YidC (Citrifermentans bemidjiense (strain ATCC BAA-1014 / DSM 16622 / JCM 12645 / Bem) (Geobacter bemidjiensis)).